Consider the following 109-residue polypeptide: Large ribosomal subunit protein uL22 (109 aa).

It belongs to the universal ribosomal protein uL22 family. As to quaternary structure, part of the 50S ribosomal subunit.

Functionally, this protein binds specifically to 23S rRNA; its binding is stimulated by other ribosomal proteins, e.g. L4, L17, and L20. It is important during the early stages of 50S assembly. It makes multiple contacts with different domains of the 23S rRNA in the assembled 50S subunit and ribosome. Its function is as follows. The globular domain of the protein is located near the polypeptide exit tunnel on the outside of the subunit, while an extended beta-hairpin is found that lines the wall of the exit tunnel in the center of the 70S ribosome. The polypeptide is Large ribosomal subunit protein uL22 (Psychrobacter sp. (strain PRwf-1)).